Consider the following 304-residue polypeptide: ATP phosphoribosyltransferase (304 aa).

It belongs to the ATP phosphoribosyltransferase family. Long subfamily. It depends on Mg(2+) as a cofactor.

It localises to the cytoplasm. It catalyses the reaction 1-(5-phospho-beta-D-ribosyl)-ATP + diphosphate = 5-phospho-alpha-D-ribose 1-diphosphate + ATP. The protein operates within amino-acid biosynthesis; L-histidine biosynthesis; L-histidine from 5-phospho-alpha-D-ribose 1-diphosphate: step 1/9. Its activity is regulated as follows. Feedback inhibited by histidine. Functionally, catalyzes the condensation of ATP and 5-phosphoribose 1-diphosphate to form N'-(5'-phosphoribosyl)-ATP (PR-ATP). Has a crucial role in the pathway because the rate of histidine biosynthesis seems to be controlled primarily by regulation of HisG enzymatic activity. The protein is ATP phosphoribosyltransferase of Xanthomonas euvesicatoria pv. vesicatoria (strain 85-10) (Xanthomonas campestris pv. vesicatoria).